Consider the following 271-residue polypeptide: Putative phosphoenolpyruvate synthase regulatory protein (271 aa).

151–158 (GVSRSGKT) contributes to the ADP binding site.

The protein belongs to the pyruvate, phosphate/water dikinase regulatory protein family. PSRP subfamily.

The enzyme catalyses [pyruvate, water dikinase] + ADP = [pyruvate, water dikinase]-phosphate + AMP + H(+). It carries out the reaction [pyruvate, water dikinase]-phosphate + phosphate + H(+) = [pyruvate, water dikinase] + diphosphate. Its function is as follows. Bifunctional serine/threonine kinase and phosphorylase involved in the regulation of the phosphoenolpyruvate synthase (PEPS) by catalyzing its phosphorylation/dephosphorylation. This chain is Putative phosphoenolpyruvate synthase regulatory protein, found in Burkholderia mallei (strain NCTC 10247).